The primary structure comprises 922 residues: MKFGYKFSNLLGTVYNKGNILFTPDGNTVISPVGNRLTVFDLVNHTSITLPIQSKYNIRRLALSPNGQILITSDESGHTLIINLTRQVVLGEYKFFKTPKSILFSPNGAIIAIAVLEKVFLFKTPIIQKQPNPLIRLSVFTHKSAVISMCWSADSLKLMIGCKNGTLLIRQGKSERVSYFQVKGSGIINCFFGNEESTIAYAVTPTGLASWDYKTNEEMEQEKLERVENGETAYLREEEMDEEKLKVITENQRLYKGRWIFKGFKKFENYGVKCKVKTVCFHLKSKLLLVGFSTGQFILYEMPGFNQLYKLNISSHGISTSAINNTGEWLAFGCSELGQLLVWEWRSETYILKQQGHSYNMNTVAYSPDGQTIATGGEDGKVKIWNTTSGYCYITFTEHEGPVTAVKYSPVSSQNVVFSAGVDGTIRAFDLVRYRNFRTFVSPNKTQFSCLAVDPSGEIIAAGSLDSFEIYVWSVRTGRLTDILSGHQSPVCELAFDPINPFLASASWDKSCKIWNIFEDREIRESIQHTSDVLTCAYSQDGKKFIVSCLDGTIQIYETSTWGQIGLIDGKNDIMGGRGYKDEILAKNNSAGRAFTKIAFTPNGECIIAGGNSKYICIYHIDQQVLIKKYSTSSNLSLDGITLDINWKRVGEFGHLDAMEKDFDSDDDLYQQNKEYLTGSSKGDLSKRTTKKKQKTTSISVSPTGRAWAVSTTEGLLIYSLDDFLFFDPTDLSIDINPDSILSELNLKNYLKSLIMSIKLNEKPIIEKVFESIPFNEIQLVCQEFPIYYLKNFIQFLSGYFEKNHHLEFQMKWVKLISIYHGKYIKTNSLSMITSLRNLQKTITQTYNDISKVCDDNIFSMEYFKTVLLKELKSQEETNKISKKSQKYKKYLESKKNKEQEEDQFSDDEETVYQNNKKNKNK.

WD repeat units follow at residues 12-52 (GTVY…TLPI), 53-92 (QSKYNIRRLALSPNGQILITSDESGHTLIINLTRQVVLGE), 94-132 (KFFKTPKSILFSPNGAIIAIAVLEKVFLFKTPIIQKQPN), 141-180 (THKSAVISMCWSADSLKLMIGCKNGTLLIRQGKSERVSYF), 182-221 (VKGSGIINCFFGNEESTIAYAVTPTGLASWDYKTNEEMEQ), 271-310 (GVKCKVKTVCFHLKSKLLLVGFSTGQFILYEMPGFNQLYK), 313-353 (ISSH…YILK), 356-395 (GHSYNMNTVAYSPDGQTIATGGEDGKVKIWNTTSGYCYIT), 398-439 (EHEG…NFRT), 443-485 (PNKT…DILS), 486-525 (GHQSPVCELAFDPINPFLASASWDKSCKIWNIFEDREIRE), 528-567 (QHTSDVLTCAYSQDGKKFIVSCLDGTIQIYETSTWGQIGL), 590-629 (SAGRAFTKIAFTPNGECIIAGGNSKYICIYHIDQQVLIKK), and 691-731 (KKKQ…DPTD). The segment at 893–922 (ESKKNKEQEEDQFSDDEETVYQNNKKNKNK) is disordered. Residues 900–911 (QEEDQFSDDEET) show a composition bias toward acidic residues.

This sequence belongs to the WD repeat PWP2 family. In terms of assembly, part of the small subunit (SSU) processome, composed of more than 70 proteins and the RNA chaperone small nucleolar RNA (snoRNA) U3.

Its subcellular location is the nucleus. It is found in the nucleolus. Its function is as follows. Part of the small subunit (SSU) processome, first precursor of the small eukaryotic ribosomal subunit. During the assembly of the SSU processome in the nucleolus, many ribosome biogenesis factors, an RNA chaperone and ribosomal proteins associate with the nascent pre-rRNA and work in concert to generate RNA folding, modifications, rearrangements and cleavage as well as targeted degradation of pre-ribosomal RNA by the RNA exosome. The chain is Periodic tryptophan protein 2 homolog (pwp2) from Dictyostelium discoideum (Social amoeba).